The chain runs to 264 residues: Thymidylate synthase (264 aa).

A dUMP-binding site is contributed by Arg-21. Residue His-51 participates in (6R)-5,10-methylene-5,6,7,8-tetrahydrofolate binding. 126–127 (RR) contributes to the dUMP binding site. Residue Cys-146 is the Nucleophile of the active site. Residues 166–169 (RSCD), Asn-177, and 207–209 (HLY) each bind dUMP. Position 169 (Asp-169) interacts with (6R)-5,10-methylene-5,6,7,8-tetrahydrofolate. Ala-263 serves as a coordination point for (6R)-5,10-methylene-5,6,7,8-tetrahydrofolate.

It belongs to the thymidylate synthase family. Bacterial-type ThyA subfamily. In terms of assembly, homodimer.

It is found in the cytoplasm. The catalysed reaction is dUMP + (6R)-5,10-methylene-5,6,7,8-tetrahydrofolate = 7,8-dihydrofolate + dTMP. It participates in pyrimidine metabolism; dTTP biosynthesis. In terms of biological role, catalyzes the reductive methylation of 2'-deoxyuridine-5'-monophosphate (dUMP) to 2'-deoxythymidine-5'-monophosphate (dTMP) while utilizing 5,10-methylenetetrahydrofolate (mTHF) as the methyl donor and reductant in the reaction, yielding dihydrofolate (DHF) as a by-product. This enzymatic reaction provides an intracellular de novo source of dTMP, an essential precursor for DNA biosynthesis. The protein is Thymidylate synthase of Shewanella putrefaciens (strain CN-32 / ATCC BAA-453).